A 286-amino-acid chain; its full sequence is Thymidylate synthase (286 aa).

Arginine 21 contributes to the dUMP binding site. Asparagine 51 contacts (6R)-5,10-methylene-5,6,7,8-tetrahydrofolate. 150–151 (RR) serves as a coordination point for dUMP. The Nucleophile role is filled by cysteine 170. Residues 190-193 (RSAD), asparagine 201, and 231-233 (HIY) each bind dUMP. A (6R)-5,10-methylene-5,6,7,8-tetrahydrofolate-binding site is contributed by aspartate 193. Alanine 285 contacts (6R)-5,10-methylene-5,6,7,8-tetrahydrofolate.

Belongs to the thymidylate synthase family. Bacterial-type ThyA subfamily. In terms of assembly, homodimer.

The protein localises to the cytoplasm. It catalyses the reaction dUMP + (6R)-5,10-methylene-5,6,7,8-tetrahydrofolate = 7,8-dihydrofolate + dTMP. Its pathway is pyrimidine metabolism; dTTP biosynthesis. In terms of biological role, catalyzes the reductive methylation of 2'-deoxyuridine-5'-monophosphate (dUMP) to 2'-deoxythymidine-5'-monophosphate (dTMP) while utilizing 5,10-methylenetetrahydrofolate (mTHF) as the methyl donor and reductant in the reaction, yielding dihydrofolate (DHF) as a by-product. This enzymatic reaction provides an intracellular de novo source of dTMP, an essential precursor for DNA biosynthesis. This chain is Thymidylate synthase, found in Mycoplasmopsis pulmonis (strain UAB CTIP) (Mycoplasma pulmonis).